The chain runs to 151 residues: Protein archease-like (151 aa).

3 residues coordinate Ca(2+): Asp-20, Asp-150, and Ile-151.

It belongs to the archease family.

Component of the tRNA-splicing ligase complex required to facilitate the enzymatic turnover of catalytic subunit RtcB. In Dictyostelium discoideum (Social amoeba), this protein is Protein archease-like.